Consider the following 132-residue polypeptide: Inactive D-aminoacyl-tRNA deacylase (132 aa).

The protein belongs to the DTD family.

In terms of biological role, a non-functional D-aminoacyl-tRNA deacylase. The sequence is that of Inactive D-aminoacyl-tRNA deacylase from Bacillus subtilis (strain 168).